Here is a 224-residue protein sequence, read N- to C-terminus: MPGLLLGDEAPNFEADTTQGGIRFHDFLGDSWGILFSHPRDFTPVCTTELGRAAKLAPEFSKRNVKMIALSIDSVPDHLAWSKDINAYNGDQPVEKLPFPIIADKDRELAVKLGMLDPDERDKDGMPLTARVVFIFGPDKKLKLSILYPATTGRNFDEILRVVDSLQLTAYKKVATPVDWKCGDSVMVVPTLPDEEAKKLFPKGVFTKDLPSGKKYLRYTPQPE.

A Thioredoxin domain is found at L4–L168. A required and sufficient for targeting to lysosomes and lamellar bodies region spans residues D30–P39. C46 serves as the catalytic Cysteine sulfenic acid (-SOH) intermediate; for peroxidase activity. At Y88 the chain carries Phosphotyrosine. D139 acts as the For phospholipase activity in catalysis. At T176 the chain carries Phosphothreonine; by MAPK.

Belongs to the peroxiredoxin family. Prx6 subfamily. Homodimer. Interacts with GSTP1; mediates PRDX6 glutathionylation and regeneration. Post-translationally, irreversibly inactivated by overoxidation of Cys-46 to sulfinic acid (Cys-SO(2)H) and sulfonic acid (Cys-SO(3)H) forms upon oxidative stress. In terms of processing, phosphorylation at Thr-176 by MAP kinases increases the phospholipase activity of the enzyme. The phosphorylated form exhibits a greater lysophosphatidylcholine acyltransferase activity compared to the non-phosphorylated form.

It localises to the cytoplasm. It is found in the lysosome. It catalyses the reaction a hydroperoxide + 2 glutathione = an alcohol + glutathione disulfide + H2O. The enzyme catalyses a 1,2-diacyl-sn-glycero-3-phosphocholine + H2O = a 1-acyl-sn-glycero-3-phosphocholine + a fatty acid + H(+). The catalysed reaction is a 1-acyl-sn-glycero-3-phosphocholine + an acyl-CoA = a 1,2-diacyl-sn-glycero-3-phosphocholine + CoA. It carries out the reaction 1-hexadecanoyl-sn-glycero-3-phosphocholine + hexadecanoyl-CoA = 1,2-dihexadecanoyl-sn-glycero-3-phosphocholine + CoA. It catalyses the reaction 1,2-dihexadecanoyl-sn-glycero-3-phosphocholine + H2O = 1-hexadecanoyl-sn-glycero-3-phosphocholine + hexadecanoate + H(+). Its function is as follows. Thiol-specific peroxidase that catalyzes the reduction of hydrogen peroxide and organic hydroperoxides to water and alcohols, respectively. Can reduce H(2)O(2) and short chain organic, fatty acid, and phospholipid hydroperoxides. Also has phospholipase activity, and can therefore either reduce the oxidized sn-2 fatty acyl group of phospholipids (peroxidase activity) or hydrolyze the sn-2 ester bond of phospholipids (phospholipase activity). These activities are dependent on binding to phospholipids at acidic pH and to oxidized phospholipds at cytosolic pH. Plays a role in cell protection against oxidative stress by detoxifying peroxides and in phospholipid homeostasis. Exhibits acyl-CoA-dependent lysophospholipid acyltransferase which mediates the conversion of lysophosphatidylcholine (1-acyl-sn-glycero-3-phosphocholine or LPC) into phosphatidylcholine (1,2-diacyl-sn-glycero-3-phosphocholine or PC). Shows a clear preference for LPC as the lysophospholipid and for palmitoyl CoA as the fatty acyl substrate. In Gallus gallus (Chicken), this protein is Peroxiredoxin-6 (PRDX6).